Reading from the N-terminus, the 370-residue chain is Early nodulin-like protein 1 (370 aa).

Residues 1–27 form the signal peptide; the sequence is MSAIMKSLCFSFLILASFATFFSVADA. Residues 28–129 form the Phytocyanin domain; the sequence is WRFNVGGNGA…GQKLIVVVLA (102 aa). N-linked (GlcNAc...) asparagine glycosylation is present at Asn58. Cys83 and Cys117 are oxidised to a cystine. Over residues 135-175 the composition is skewed to low complexity; it reads SAPAHSPVPSVSPTQPPKSHSPVSPVAPASAPSKSQPPRSS. The disordered stretch occupies residues 135 to 347; sequence SAPAHSPVPS…PAPSPRTNSA (213 aa). Residues 176–194 are compositionally biased toward polar residues; sequence VSPAQPPKSSSPISHTPAL. Composition is skewed to low complexity over residues 195-205 and 215-290; these read SPSHATSHSPA and SPVS…QSPA. The segment covering 291–305 has biased composition (pro residues); that stretch reads TPSPMTPQSPSPVSS. Over residues 306–318 the composition is skewed to low complexity; it reads PSPDQSAAPSDQS. The span at 319–334 shows a compositional bias: polar residues; the sequence is TPLAPSPSETTPTADN. Asn334 is a glycosylation site (N-linked (GlcNAc...) asparagine). The GPI-anchor amidated asparagine moiety is linked to residue Asn345. A propeptide spans 346–370 (removed in mature form); the sequence is SASGLAVTSVMSTLFSATFTFLMFA.

It belongs to the early nodulin-like (ENODL) family. Mostly expressed in stems, leaves and flowers, and, to a lower extent, in seedlings, roots and seeds.

It localises to the cell membrane. May act as a carbohydrate transporter. The chain is Early nodulin-like protein 1 from Arabidopsis thaliana (Mouse-ear cress).